The chain runs to 160 residues: Baculoviral IAP repeat-containing protein 5.1 (160 aa).

One copy of the BIR repeat lies at 27 to 97; the sequence is RLATFADWPF…KRSASCGFLS (71 aa). Position 43 is a phosphothreonine; by CDK1 (threonine 43). Residues cysteine 66, cysteine 69, histidine 86, and cysteine 93 each contribute to the Zn(2+) site.

It belongs to the IAP family. In terms of assembly, component of the CPC at least composed of survivin/birc5, incenp, cdca8/borealin and/or cdca9/dasra-A, and aurkb/aurora-B. Interacts directly with incenp (via N-terminus), and may weakly interact with aurkb (via N-terminus) to stabilize the complex. Interacts with GTP-bound ran in both the S and M phases of the cell cycle. Also found in a complex with ubiquitin-mediated signaling proteins including at least usp9x/xFAM, nploc4/npl4 and ufd1. Ubiquitination is required for centrosome-targeting.

Its subcellular location is the cytoplasm. The protein resides in the nucleus. It localises to the chromosome. It is found in the centromere. The protein localises to the cytoskeleton. Its subcellular location is the spindle. Component of the chromosomal passenger complex (CPC), a complex that acts as a key regulator of mitosis. The CPC complex has essential functions at the centromere in ensuring correct chromosome alignment and segregation and is required for chromatin-induced microtubule stabilization and spindle assembly. Stimulates the mitotic kinase activity of aurkb/aurora-B in the CPC. Does not appear to exhibit anti-apoptotic activity. In Xenopus tropicalis (Western clawed frog), this protein is Baculoviral IAP repeat-containing protein 5.1 (birc5.1).